Reading from the N-terminus, the 292-residue chain is 4-hydroxy-tetrahydrodipicolinate synthase (292 aa).

T45 contacts pyruvate. Y133 acts as the Proton donor/acceptor in catalysis. K161 serves as the catalytic Schiff-base intermediate with substrate. I203 is a pyruvate binding site.

Belongs to the DapA family. In terms of assembly, homotetramer; dimer of dimers.

The protein resides in the cytoplasm. It catalyses the reaction L-aspartate 4-semialdehyde + pyruvate = (2S,4S)-4-hydroxy-2,3,4,5-tetrahydrodipicolinate + H2O + H(+). Its pathway is amino-acid biosynthesis; L-lysine biosynthesis via DAP pathway; (S)-tetrahydrodipicolinate from L-aspartate: step 3/4. Functionally, catalyzes the condensation of (S)-aspartate-beta-semialdehyde [(S)-ASA] and pyruvate to 4-hydroxy-tetrahydrodipicolinate (HTPA). The protein is 4-hydroxy-tetrahydrodipicolinate synthase of Salmonella typhi.